Here is a 134-residue protein sequence, read N- to C-terminus: Profilin-1 (134 aa).

It belongs to the profilin family. As to quaternary structure, occurs in many kinds of cells as a complex with monomeric actin in a 1:1 ratio.

It localises to the cytoplasm. Its subcellular location is the cytoskeleton. Its function is as follows. Binds to actin and affects the structure of the cytoskeleton. At high concentrations, profilin prevents the polymerization of actin, whereas it enhances it at low concentrations. By binding to PIP2, it inhibits the formation of IP3 and DG. The sequence is that of Profilin-1 (PRO1) from Nicotiana tabacum (Common tobacco).